A 268-amino-acid polypeptide reads, in one-letter code: Zygote formation protein zyg1 (268 aa).

In terms of biological role, plays an essential role in zygote formation by inducing sexual cell fusion. Overexpressing cells eventually formed many loose mounds, in which giant multinucleate cells were surrounded by normal-sized cells. The chain is Zygote formation protein zyg1 (zyg1) from Dictyostelium mucoroides (Slime mold).